A 910-amino-acid polypeptide reads, in one-letter code: Triacylglycerol lipase 4 (910 aa).

Residues 51-66 (SKDNSDVERVEEDAGK) are compositionally biased toward basic and acidic residues. Residues 51–120 (SKDNSDVERV…TDEGEDERQG (70 aa)) form a disordered region. Serine 55 carries the post-translational modification Phosphoserine. Residues 70–85 (TGKNKTTNKVNFNLDT) show a composition bias toward polar residues. Positions 90 to 116 (KLDDDQETVTENENNDIEMVETDEGED) are enriched in acidic residues. Positions 282–483 (LVLSGGGTFG…DNDLPISRLS (202 aa)) constitute a PNPLA domain. A GXGXXG motif is present at residues 286 to 291 (GGGTFG). Residues 313–317 (GSSAG) carry the GXSXG motif. Residue serine 315 is the Nucleophile of the active site. The active-site Proton acceptor is aspartate 470. Disordered stretches follow at residues 657-683 (EQTSDESKNPENSTLLTRTPTKGDNHI) and 713-777 (SPSG…PILQ). Residues 666 to 683 (PENSTLLTRTPTKGDNHI) are compositionally biased toward polar residues. A Phosphothreonine; by Cdk1 modification is found at threonine 675. Phosphoserine occurs at positions 737, 749, 751, and 836. Polar residues predominate over residues 739–768 (TISTSRRPAKSFSFSVASPTSRMLRQSSKI). The segment at 874–910 (RRHSIDGRPPSQATKSSPFRSRPSSSTQHKSTTSFTQ) is disordered. Low complexity predominate over residues 889 to 899 (SSPFRSRPSSS). Residue serine 890 is modified to Phosphoserine; by Cdk1. The segment covering 900 to 910 (TQHKSTTSFTQ) has biased composition (polar residues).

Phosphorylation at Thr-675 and Ser-890 by Cdk1/CDC28 stimulates enzyme activity in vivo.

Its subcellular location is the lipid droplet. It catalyses the reaction a triacylglycerol + H2O = a diacylglycerol + a fatty acid + H(+). It carries out the reaction 1,2,3-tri-(9Z-octadecenoyl)-glycerol + H2O = di-(9Z)-octadecenoylglycerol + (9Z)-octadecenoate + H(+). The catalysed reaction is 1,2-dihexadecanoyl-sn-glycero-3-phosphocholine + H2O = 1-hexadecanoyl-sn-glycero-3-phosphocholine + hexadecanoate + H(+). The enzyme catalyses cholesteryl (9Z-octadecenoate) + H2O = cholesterol + (9Z)-octadecenoate + H(+). It catalyses the reaction 1-(9Z-octadecenoyl)-sn-glycero-3-phosphate + (9Z)-octadecenoyl-CoA = 1,2-di-(9Z-octadecenoyl)-sn-glycero-3-phosphate + CoA. With respect to regulation, phosphorylated and activated by cyclin-dependent kinase 1 (Cdk1/CDC28). Loses its lipolytic activity in cells lacking nonpolar lipids, but retains its side activity as lysophospholipid acyltransferase. Its function is as follows. Lipid particle-localized triacylglycerol (TAG) lipase. The lipid droplet/particle is a lipid storage compartment which serves as a depot of energy and building blocks for membrane lipid biosynthesis. Involved in the mobilization of the non-polar storage lipids triacylglycerols (TAGs) from lipid particles by hydrolysis of TAGs, releasing and supplying specific fatty acids to the appropriate metabolic pathways. Also has steryl ester (SE) hydrolase and phospholipase A(2) (PLA(2)) activities, and catalyzes the acylation of lysophosphatidic acid (LPA). Contributes to early bud formation in late G1 phase of the cell cycle upon phosphorylation and activation by cyclin-dependent kinase 1 (Cdk1/CDC28). This Saccharomyces cerevisiae (strain ATCC 204508 / S288c) (Baker's yeast) protein is Triacylglycerol lipase 4 (TGL4).